Consider the following 82-residue polypeptide: MVTIRLARHGAKKRPFYQIVVADSRNSVTGRFIEKVGFFNPTAQGQEEGLRLDLDRVNHWVGQGASLSDRVAKLVKDAQKAA.

It belongs to the bacterial ribosomal protein bS16 family.

In Vibrio atlanticus (strain LGP32) (Vibrio splendidus (strain Mel32)), this protein is Small ribosomal subunit protein bS16.